A 332-amino-acid polypeptide reads, in one-letter code: Fructose-1,6-bisphosphatase class 1 (332 aa).

4 residues coordinate Mg(2+): glutamate 89, aspartate 110, leucine 112, and aspartate 113. Residues 113–116 (DGSS), asparagine 206, tyrosine 239, 257–259 (YLY), and lysine 269 contribute to the substrate site. Glutamate 275 serves as a coordination point for Mg(2+).

This sequence belongs to the FBPase class 1 family. In terms of assembly, homotetramer. Mg(2+) is required as a cofactor.

It is found in the cytoplasm. The enzyme catalyses beta-D-fructose 1,6-bisphosphate + H2O = beta-D-fructose 6-phosphate + phosphate. It participates in carbohydrate biosynthesis; gluconeogenesis. The protein is Fructose-1,6-bisphosphatase class 1 of Cronobacter sakazakii (strain ATCC BAA-894) (Enterobacter sakazakii).